The primary structure comprises 83 residues: Exodeoxyribonuclease 7 small subunit (83 aa).

Belongs to the XseB family. Heterooligomer composed of large and small subunits.

It is found in the cytoplasm. It catalyses the reaction Exonucleolytic cleavage in either 5'- to 3'- or 3'- to 5'-direction to yield nucleoside 5'-phosphates.. Its function is as follows. Bidirectionally degrades single-stranded DNA into large acid-insoluble oligonucleotides, which are then degraded further into small acid-soluble oligonucleotides. The polypeptide is Exodeoxyribonuclease 7 small subunit (Rhodopseudomonas palustris (strain BisB5)).